Here is a 631-residue protein sequence, read N- to C-terminus: Chimallin (631 aa).

Residues 1-29 show a composition bias toward low complexity; it reads MIRDTATNTTQTQAAPQQAPAQQFTQAPQ. A disordered region spans residues 1–63; that stretch reads MIRDTATNTT…FTRSGNVQGG (63 aa). The span at 32–59 shows a compositional bias: polar residues; the sequence is PMQSTQSQPTPSYAGTGGINSQFTRSGN. Homotetramerization stretches follow at residues 590–611 and 622–631; these read QRFM…QVHS and QYQTGPSSFY.

This sequence belongs to the Phikzvirus chimallin family. As to quaternary structure, homotetramer. The tetrameric protomers further assemble as a square grid.

Its subcellular location is the host cytoplasm. Functionally, self-assembles to form a proteinaceous shell that encloses the viral DNA and compartmentalizes proteins and DNA during viral infection. This micrometer-scale compartment contains narrow pores and is the site of viral replication, with the proteins involved in DNA replication localized inside. Provides a surface for docking of capsids during packaging. Probably protects the viral genome against host defenses. The chain is Chimallin from Pseudomonas chlororaphis (Pseudomonas chlororaphis phage 201phi2-1).